Here is a 100-residue protein sequence, read N- to C-terminus: UPF0213 protein YhbQ (100 aa).

The region spanning 2-77 is the GIY-YIG domain; the sequence is TPWFLYLIRT…KQLTKRQKER (76 aa).

This sequence belongs to the UPF0213 family.

This chain is UPF0213 protein YhbQ, found in Escherichia coli (strain K12 / MC4100 / BW2952).